The chain runs to 182 residues: UPF0397 protein llmg_0343 (182 aa).

Transmembrane regions (helical) follow at residues 8–28 (IVVA…LINI), 42–62 (AVLA…IGFI), 74–94 (APWW…GFGV), 114–134 (IVQF…GDIL), and 146–166 (QGVV…TLLL).

The protein belongs to the UPF0397 family.

Its subcellular location is the cell membrane. This is UPF0397 protein llmg_0343 from Lactococcus lactis subsp. cremoris (strain MG1363).